The sequence spans 165 residues: Large ribosomal subunit protein uL10 (165 aa).

Lysine 37 and lysine 105 each carry N6-acetyllysine.

It belongs to the universal ribosomal protein uL10 family. In terms of assembly, part of the ribosomal stalk of the 50S ribosomal subunit. The N-terminus interacts with L11 and the large rRNA to form the base of the stalk. The C-terminus forms an elongated spine to which L12 dimers bind in a sequential fashion forming a multimeric L10(L12)X complex.

Protein L10 is also a translational repressor protein. It controls the translation of the rplJL-rpoBC operon by binding to its mRNA. Its function is as follows. Forms part of the ribosomal stalk, playing a central role in the interaction of the ribosome with GTP-bound translation factors. This chain is Large ribosomal subunit protein uL10 (rplJ), found in Escherichia coli O6:H1 (strain CFT073 / ATCC 700928 / UPEC).